Here is a 300-residue protein sequence, read N- to C-terminus: Acetaldehyde dehydrogenase (300 aa).

An NAD(+)-binding site is contributed by 10–13; it reads SGNI. Catalysis depends on Cys-129, which acts as the Acyl-thioester intermediate. NAD(+)-binding positions include 160–168 and Asn-271; that span reads SAGPGTRKN.

Belongs to the acetaldehyde dehydrogenase family.

It catalyses the reaction acetaldehyde + NAD(+) + CoA = acetyl-CoA + NADH + H(+). This Alkalilimnicola ehrlichii (strain ATCC BAA-1101 / DSM 17681 / MLHE-1) protein is Acetaldehyde dehydrogenase.